A 619-amino-acid chain; its full sequence is Guanylate cyclase soluble subunit beta-1 (619 aa).

Residue histidine 105 participates in heme binding. One can recognise a Guanylate cyclase domain in the interval 421-554; that stretch reads TILFSGIVGF…NTVNLTSRTE (134 aa).

The protein belongs to the adenylyl cyclase class-4/guanylyl cyclase family. As to quaternary structure, the active enzyme is formed by a heterodimer of an alpha and a beta subunit. Heterodimer with GUCY1A1. Can also form inactive homodimers in vitro. Heme is required as a cofactor. As to expression, detected in brain cortex and cerebellum (at protein level).

Its subcellular location is the cytoplasm. It catalyses the reaction GTP = 3',5'-cyclic GMP + diphosphate. With respect to regulation, activated by nitric oxide in the presence of magnesium or manganese ions. In terms of biological role, mediates responses to nitric oxide (NO) by catalyzing the biosynthesis of the signaling molecule cGMP. In Homo sapiens (Human), this protein is Guanylate cyclase soluble subunit beta-1.